The sequence spans 380 residues: Cytochrome b (380 aa).

A run of 4 helical transmembrane segments spans residues 34–54 (FGSLLAVCLVTQILTGLLLAM), 78–99 (WLIRNLHANGASFFFICIFLHI), 114–134 (WNTGVILLLTLMATAFVGYVL), and 179–199 (FFALHFLLPFVIAGITIIHLT). Positions 84 and 98 each coordinate heme b. Residues His183 and His197 each contribute to the heme b site. His202 lines the a ubiquinone pocket. The next 4 helical transmembrane spans lie at 227-247 (IKDILGLTLMFIPFLTLALFS), 289-309 (LGGVLALAASVLILLLIPFLH), 321-341 (LSQTLFWLLVANLLILTWIGS), and 348-368 (FIIIGQMASLSYFSILLILFP).

Belongs to the cytochrome b family. In terms of assembly, the cytochrome bc1 complex contains 11 subunits: 3 respiratory subunits (MT-CYB, CYC1 and UQCRFS1), 2 core proteins (UQCRC1 and UQCRC2) and 6 low-molecular weight proteins (UQCRH/QCR6, UQCRB/QCR7, UQCRQ/QCR8, UQCR10/QCR9, UQCR11/QCR10 and a cleavage product of UQCRFS1). This cytochrome bc1 complex then forms a dimer. Heme b serves as cofactor.

It is found in the mitochondrion inner membrane. Component of the ubiquinol-cytochrome c reductase complex (complex III or cytochrome b-c1 complex) that is part of the mitochondrial respiratory chain. The b-c1 complex mediates electron transfer from ubiquinol to cytochrome c. Contributes to the generation of a proton gradient across the mitochondrial membrane that is then used for ATP synthesis. This Alectoris chukar (Chukar partridge) protein is Cytochrome b (MT-CYB).